A 221-amino-acid chain; its full sequence is Probable septum site-determining protein MinC (221 aa).

The protein belongs to the MinC family. As to quaternary structure, interacts with MinD and FtsZ.

In terms of biological role, cell division inhibitor that blocks the formation of polar Z ring septums. Rapidly oscillates between the poles of the cell to destabilize FtsZ filaments that have formed before they mature into polar Z rings. Prevents FtsZ polymerization. This is Probable septum site-determining protein MinC from Shewanella woodyi (strain ATCC 51908 / MS32).